A 246-amino-acid polypeptide reads, in one-letter code: Triosephosphate isomerase (246 aa).

9–11 (NWK) lines the substrate pocket. Histidine 95 functions as the Electrophile in the catalytic mechanism. Catalysis depends on glutamate 165, which acts as the Proton acceptor. Residues glycine 171, serine 210, and 231–232 (GG) each bind substrate.

It belongs to the triosephosphate isomerase family. As to quaternary structure, homodimer.

It localises to the cytoplasm. The enzyme catalyses D-glyceraldehyde 3-phosphate = dihydroxyacetone phosphate. It participates in carbohydrate biosynthesis; gluconeogenesis. Its pathway is carbohydrate degradation; glycolysis; D-glyceraldehyde 3-phosphate from glycerone phosphate: step 1/1. Functionally, involved in the gluconeogenesis. Catalyzes stereospecifically the conversion of dihydroxyacetone phosphate (DHAP) to D-glyceraldehyde-3-phosphate (G3P). This Thermodesulfovibrio yellowstonii (strain ATCC 51303 / DSM 11347 / YP87) protein is Triosephosphate isomerase.